The sequence spans 473 residues: Spliceosome-associated protein CWC27 homolog (473 aa).

Residue Ser2 is modified to N-acetylserine. Positions 11 to 166 (TNGKVLLKTT…NPHKIKSCEV (156 aa)) constitute a PPIase cyclophilin-type domain. Positions 177-193 (REIKRPKKEKPEEEVKK) are enriched in basic and acidic residues. Disordered regions lie at residues 177–386 (REIK…EDQT) and 399–473 (QAIA…KERR). Residues 206–230 (SFGEEAEEEEEEVNRVSQSMKGKSK) adopt a coiled-coil conformation. Positions 231–241 (SSHDLLKDDPH) are enriched in basic and acidic residues. A compositionally biased stretch (acidic residues) spans 257–266 (GDLDDGGEGE). Basic and acidic residues-rich tracts occupy residues 267–287 (SAEH…ERIA), 305–348 (EVEK…KRSE), and 360–372 (EYRR…EALR). The stretch at 305 to 378 (EVEKKSVNRS…EALRKQQSKK (74 aa)) forms a coiled coil. Ser347 carries the phosphoserine modification. Over residues 405-419 (PENDIPETEVEDDEG) the composition is skewed to acidic residues. 2 stretches are compositionally biased toward basic and acidic residues: residues 426–438 (QFED…KDAS) and 458–473 (RREE…KERR).

It belongs to the cyclophilin-type PPIase family. Part of the activated spliceosome B/catalytic step 1 spliceosome, one of the forms of the spliceosome which has a well-formed active site but still cannot catalyze the branching reaction and is composed at least of 52 proteins, the U2, U5 and U6 snRNAs and the pre-mRNA. Recruited during early steps of activated spliceosome B maturation, it is probably one of the first proteins released from this complex as he matures to the spliceosome C complex. Component of the minor spliceosome, which splices U12-type introns.

Its subcellular location is the nucleus. Its function is as follows. As part of the spliceosome, plays a role in pre-mRNA splicing. Probable inactive PPIase with no peptidyl-prolyl cis-trans isomerase activity. As a component of the minor spliceosome, involved in the splicing of U12-type introns in pre-mRNAs. This Pongo abelii (Sumatran orangutan) protein is Spliceosome-associated protein CWC27 homolog.